A 47-amino-acid polypeptide reads, in one-letter code: Lysis protein for colicin E8 (47 aa).

Residues 1–19 (MKKITGIILLLLAVIILAA) form the signal peptide. Cys-20 is lipidated: N-palmitoyl cysteine. Residue Cys-20 is the site of S-diacylglycerol cysteine attachment.

It localises to the cell outer membrane. In terms of biological role, lysis proteins are required for both colicin release and partial cell lysis. The polypeptide is Lysis protein for colicin E8 (lys) (Escherichia coli).